Here is a 139-residue protein sequence, read N- to C-terminus: Histone H3 (139 aa).

Residues 1–48 (MARTKSTVIARKVTGGKAPRKQIGSKAARKSAAPSNTSGGVKKPHRYK) form a disordered region. N6,N6,N6-trimethyllysine; alternate is present on Lys-5. Lys-5 carries the N6,N6-dimethyllysine; alternate modification. N6-methyllysine; alternate is present on residues Lys-5 and Lys-12. N6-acetyllysine; alternate occurs at positions 12, 17, 21, 26, 30, and 42. At Lys-17 the chain carries N6,N6-dimethyllysine; alternate. An N6-methyllysine; alternate mark is found at Lys-21, Lys-26, Lys-30, and Lys-42. N6,N6,N6-trimethyllysine; alternate occurs at positions 30 and 42. Residues Lys-30 and Lys-42 each carry the N6,N6-dimethyllysine; alternate modification. Lys-62 and Lys-70 each carry N6-acetyllysine. N6,N6,N6-trimethyllysine; alternate is present on Lys-85. Lys-85 carries the post-translational modification N6,N6-dimethyllysine; alternate. N6-methyllysine; alternate is present on Lys-85.

This sequence belongs to the histone H3 family. The nucleosome is a histone octamer containing two molecules each of H2A, H2B, H3 and H4 assembled in one H3-H4 heterotetramer and two H2A-H2B heterodimers. The octamer wraps approximately 147 bp of DNA. Mono-, di- and trimethylated by the COMPASS complex to form H3K4me1/2/3. H3K4me activates gene expression by regulating transcription elongation and plays a role in telomere length maintenance. H3K4me enrichment correlates with transcription levels, and occurs in a 5' to 3' gradient with H3K4me3 enrichment at the 5'-end of genes, shifting to H3K4me2 and then H3K4me1. Methylated by SET2 to form H3K36me. H3K36me represses gene expression. Methylated by DOT1 to form H3K79me. H3K79me is required for association of SIR proteins with telomeric regions and for telomeric silencing. The COMPASS-mediated formation of H3K4me2/3 and the DOT1-mediated formation of H3K79me require H2BK123ub1. In terms of processing, acetylation of histone H3 leads to transcriptional activation. Acetylated by GCN5 to form H3K14ac. H3K14ac can also be formed by ESA1. H3K56ac formation occurs predominantly in newly synthesized H3 molecules during G1, S and G2/M of the cell cycle and may be involved in DNA repair.

The protein localises to the nucleus. The protein resides in the chromosome. Functionally, core component of nucleosome. Nucleosomes wrap and compact DNA into chromatin, limiting DNA accessibility to the cellular machineries which require DNA as a template. Histones thereby play a central role in transcription regulation, DNA repair, DNA replication and chromosomal stability. DNA accessibility is regulated via a complex set of post-translational modifications of histones, also called histone code, and nucleosome remodeling. The protein is Histone H3 (HHT1) of Yarrowia lipolytica (strain CLIB 122 / E 150) (Yeast).